Reading from the N-terminus, the 58-residue chain is Small ribosomal subunit protein bS21 (58 aa).

The tract at residues 35 to 58 (REHYESPSVRRKKKSEAARKRRYK) is disordered. Basic residues predominate over residues 43–58 (VRRKKKSEAARKRRYK).

The protein belongs to the bacterial ribosomal protein bS21 family.

This Acetivibrio thermocellus (strain ATCC 27405 / DSM 1237 / JCM 9322 / NBRC 103400 / NCIMB 10682 / NRRL B-4536 / VPI 7372) (Clostridium thermocellum) protein is Small ribosomal subunit protein bS21.